We begin with the raw amino-acid sequence, 1070 residues long: DNA-directed RNA polymerase subunit beta (1070 aa).

This sequence belongs to the RNA polymerase beta chain family. In plastids the minimal PEP RNA polymerase catalytic core is composed of four subunits: alpha, beta, beta', and beta''. When a (nuclear-encoded) sigma factor is associated with the core the holoenzyme is formed, which can initiate transcription.

Its subcellular location is the plastid. The catalysed reaction is RNA(n) + a ribonucleoside 5'-triphosphate = RNA(n+1) + diphosphate. DNA-dependent RNA polymerase catalyzes the transcription of DNA into RNA using the four ribonucleoside triphosphates as substrates. The polypeptide is DNA-directed RNA polymerase subunit beta (Cuscuta exaltata (Tall dodder)).